A 128-amino-acid chain; its full sequence is Lysozyme C-1 (128 aa).

Residues 1-128 (KVYDRCEFAR…VSQYIRGCKL (128 aa)) form the C-type lysozyme domain. 4 disulfide bridges follow: Cys-6–Cys-126, Cys-30–Cys-114, Cys-63–Cys-79, and Cys-75–Cys-93. Residues Glu-35 and Asp-51 contribute to the active site.

It belongs to the glycosyl hydrolase 22 family. Monomer.

It is found in the secreted. The catalysed reaction is Hydrolysis of (1-&gt;4)-beta-linkages between N-acetylmuramic acid and N-acetyl-D-glucosamine residues in a peptidoglycan and between N-acetyl-D-glucosamine residues in chitodextrins.. In terms of biological role, lysozymes have primarily a bacteriolytic function; those in tissues and body fluids are associated with the monocyte-macrophage system and enhance the activity of immunoagents. The chain is Lysozyme C-1 from Sus scrofa (Pig).